The primary structure comprises 481 residues: Dynein axonemal assembly factor 8 (481 aa).

Disordered stretches follow at residues D70 to G91, L131 to P233, T306 to S397, and R415 to I454. 3 positions are modified to phosphoserine: S83, S145, and S147. Polar residues predominate over residues G144–E155. Positions G163–N176 are enriched in basic and acidic residues. Over residues S177–R188 the composition is skewed to basic residues. The span at K198–Q211 shows a compositional bias: polar residues. Positions S310 to A322 are enriched in basic and acidic residues. Residues R323–E336 are compositionally biased toward polar residues. At S328 the chain carries Phosphoserine. Basic and acidic residues-rich tracts occupy residues R337–T349 and R359–S380.

Its subcellular location is the dynein axonemal particle. The protein localises to the cytoplasm. In cyliated cells, dynein axonemal particle-specific protein required for deployment of ODA to the axoneme. Interacts with outer dynein arm (ODA) subunits. The chain is Dynein axonemal assembly factor 8 (Dnaaf8) from Rattus norvegicus (Rat).